The chain runs to 577 residues: Probable ATP-dependent RNA helicase DDX55 homolog (577 aa).

The Q motif motif lies at A7–V37. The Helicase ATP-binding domain maps to G40–V218. Residue S53–T60 participates in ATP binding. Residues D166–D169 carry the DEAD box motif. The region spanning T231–R393 is the Helicase C-terminal domain. A disordered region spans residues A508–L577. A compositionally biased stretch (basic residues) spans E510 to S530.

This sequence belongs to the DEAD box helicase family. DDX55/SPB4 subfamily.

It carries out the reaction ATP + H2O = ADP + phosphate + H(+). Probable ATP-binding RNA helicase. The sequence is that of Probable ATP-dependent RNA helicase DDX55 homolog from Caenorhabditis briggsae.